The chain runs to 447 residues: Probable cytosol aminopeptidase (447 aa).

K218 and D223 together coordinate Mn(2+). The active site involves K230. Mn(2+)-binding residues include D241, D300, and E302. R304 is an active-site residue.

Belongs to the peptidase M17 family. Mn(2+) is required as a cofactor.

It is found in the cytoplasm. The catalysed reaction is Release of an N-terminal amino acid, Xaa-|-Yaa-, in which Xaa is preferably Leu, but may be other amino acids including Pro although not Arg or Lys, and Yaa may be Pro. Amino acid amides and methyl esters are also readily hydrolyzed, but rates on arylamides are exceedingly low.. The enzyme catalyses Release of an N-terminal amino acid, preferentially leucine, but not glutamic or aspartic acids.. Its function is as follows. Presumably involved in the processing and regular turnover of intracellular proteins. Catalyzes the removal of unsubstituted N-terminal amino acids from various peptides. This is Probable cytosol aminopeptidase (pepA) from Mycoplasma genitalium (strain ATCC 33530 / DSM 19775 / NCTC 10195 / G37) (Mycoplasmoides genitalium).